Here is a 469-residue protein sequence, read N- to C-terminus: UDP-glycosyltransferase 43 (469 aa).

Residues serine 280, 345–346 (WV), 363–371 (HCGWNSILE), and 385–388 (YSEQ) each bind UDP-alpha-D-glucose.

It belongs to the UDP-glycosyltransferase family.

With respect to regulation, inhibited by Cu(2+) or Zn(2+). Its function is as follows. Glycosyltransferase that catalyzes the C-glucosylation of daidzein to puerarin. Shows activity with the isoflavones daidzein and genistein, but has no activity towards flavonoids such as 2-hydroxynaringenin. Can use UDP-glucose, but not UDP-galactose or UDP-glucuronic acid as sugar donor. Does not require bivalent cations for activity. This chain is UDP-glycosyltransferase 43, found in Pueraria montana var. lobata (Kudzu vine).